A 97-amino-acid chain; its full sequence is Conotoxin Cal6.1b (97 aa).

The N-terminal stretch at 1-22 is a signal peptide; sequence MKLTTVLVVALLVLAACQFTVT. Residues 22 to 46 form a disordered region; that stretch reads TDNSGDDPENPSLRSAGENQNPDST. A propeptide spanning residues 23–68 is cleaved from the precursor; that stretch reads DNSGDDPENPSLRSAGENQNPDSTKTITAWATRDMTNMRRGLNRPS. Cystine bridges form between Cys71-Cys87, Cys78-Cys91, and Cys86-Cys96.

Belongs to the conotoxin O1 superfamily. As to expression, expressed by the venom duct.

Its subcellular location is the secreted. In terms of biological role, probable neurotoxin with unknown target. Possibly targets ion channels. The sequence is that of Conotoxin Cal6.1b from Californiconus californicus (California cone).